Consider the following 185-residue polypeptide: Ribosome-recycling factor (185 aa).

This sequence belongs to the RRF family.

The protein localises to the cytoplasm. Functionally, responsible for the release of ribosomes from messenger RNA at the termination of protein biosynthesis. May increase the efficiency of translation by recycling ribosomes from one round of translation to another. The protein is Ribosome-recycling factor of Sodalis glossinidius (strain morsitans).